The sequence spans 61 residues: Large ribosomal subunit protein uL30 (61 aa).

The protein belongs to the universal ribosomal protein uL30 family. As to quaternary structure, part of the 50S ribosomal subunit.

The sequence is that of Large ribosomal subunit protein uL30 from Fervidobacterium nodosum (strain ATCC 35602 / DSM 5306 / Rt17-B1).